We begin with the raw amino-acid sequence, 566 residues long: Protein RocB (566 aa).

Involved in arginine degradative pathway. The protein is Protein RocB (rocB) of Bacillus subtilis (strain 168).